The sequence spans 2772 residues: Protein DDB_G0276689 (2772 aa).

Disordered regions lie at residues 50–82 (QQLKNQQKQTQSDNNNNNNNNNNNNNNNNNNNN), 371–415 (NLET…NGKS), 475–514 (LDINSKNNNNDNNNNNNNNSSSSGSNSSSSRNKNNLKNNL), 612–650 (NKNNNNNNNNNNNNNNNNNNNNNNNNNNNNNNNNNNNNE), 685–708 (LRGSFSPSSMSPSIPPSASNDSSL), and 933–982 (LVNN…NNSN). Composition is skewed to low complexity over residues 376 to 412 (NNNNNNNNNNNNNNNNNNNNNNNNNNNNNNNNNNNNN), 478 to 514 (NSKNNNNDNNNNNNNNSSSSGSNSSSSRNKNNLKNNL), 614 to 649 (NNNNNNNNNNNNNNNNNNNNNNNNNNNNNNNNNNNN), and 688 to 708 (SFSPSSMSPSIPPSASNDSSL). One copy of the LRR 1 repeat lies at 1065 to 1089 (LSKWILNLDDNNYNHIPFMSLVLMP). The tract at residues 1282 to 1319 (NNNNIDNNNNNNNNNNNNNNNNNNNNNNNNNNNNNNNN) is disordered. 2 LRR repeats span residues 1393-1416 (LSNLLQVDLSDLIISSISHTTPKN) and 1543-1567 (HKDVEPFIQFSIENSKKLPSNSFSN). Low complexity predominate over residues 1587 to 1619 (QNNNYNNNNYNNNYNNNNNNNNNNNNNNNNNNN). The segment at 1587–1622 (QNNNYNNNNYNNNYNNNNNNNNNNNNNNNNNNNIDN) is disordered. One copy of the LRR 4 repeat lies at 1899 to 1922 (LEELTKQEIGYQVLLVLPTDLQVE). Polar residues-rich tracts occupy residues 1999–2011 (YVSNNNYNKNDQI) and 2073–2083 (LNIVHSTSPNS). 3 disordered regions span residues 1999–2021 (YVSNNNYNKNDQINSKEKDKDKK), 2054–2083 (EISNRSSTPPPPPPTETPSLNIVHSTSPNS), and 2367–2386 (NNSSNNSNNNNNTNNNNNNN). The LRR 5 repeat unit spans residues 2414–2439 (TTIINNIEMDKNRLDEAIYYLKKYGN).

The polypeptide is Protein DDB_G0276689 (Dictyostelium discoideum (Social amoeba)).